The primary structure comprises 552 residues: MAGUK p55 subfamily member 2 (552 aa).

2 L27 domains span residues 8-59 (SESA…EETK) and 60-118 (LEAV…YETP). Serine 42 carries the phosphoserine modification. Threonine 117 is modified (phosphothreonine). Residue serine 121 is modified to Phosphoserine. The PDZ domain occupies 140 to 219 (MVGIRKTAGE…SVILKILPSY (80 aa)). An SH3 domain is found at 225–293 (PRQVFVKCHF…PSQLLEEKRK (69 aa)). A Guanylate kinase-like domain is found at 350-537 (RKTLVLIGAQ…TFRELQTAME (188 aa)).

It belongs to the MAGUK family. As to quaternary structure, can homomultimerise. Interacts with CACNG2. Interacts (via the SH3-Guanylate kinase-like sub-module) with DLG4/PSD95 and DLGAP1/GKAP. Interacts (via the PDZ domain) with CADM1 (via C-terminus). Interacts with KCNN2/SK2 (via N-terminal domain). Interacts with SRC. Post-translationally, phosphorylated by SRC. As to expression, expressed in pyramidal neurons of CA1 region of the hippocampus.

The protein resides in the cell projection. The protein localises to the dendrite. It localises to the postsynaptic density. Its subcellular location is the cytoplasm. It is found in the cytoskeleton. The protein resides in the membrane. Functionally, postsynaptic MAGUK scaffold protein that links CADM1 cell adhesion molecules to core components of the postsynaptic density. In CA1 pyramidal neurons, required for synaptic KCNN2-containing channel function and long-term potentiation expression. Seems to negatively regulate SRC function in epithelial cells. This is MAGUK p55 subfamily member 2 from Mus musculus (Mouse).